A 114-amino-acid chain; its full sequence is Histone H3-3 (114 aa).

The segment covering Asn-1–Lys-17 has biased composition (basic residues). The tract at residues Asn-1–His-32 is disordered. Residues Lys-18–Val-28 are compositionally biased toward low complexity.

It belongs to the histone H3 family. As to quaternary structure, the nucleosome is a histone octamer containing two molecules each of H2A, H2B, H3 and H4 assembled in one H3-H4 heterotetramer and two H2A-H2B heterodimers. The octamer wraps approximately 147 bp of DNA.

It is found in the nucleus. It localises to the chromosome. In terms of biological role, core component of nucleosome. Nucleosomes wrap and compact DNA into chromatin, limiting DNA accessibility to the cellular machineries which require DNA as a template. Histones thereby play a central role in transcription regulation, DNA repair, DNA replication and chromosomal stability. DNA accessibility is regulated via a complex set of post-translational modifications of histones, also called histone code, and nucleosome remodeling. The sequence is that of Histone H3-3 (H3-3) from Stylonychia lemnae (Ciliate).